The primary structure comprises 342 residues: Phenylalanine--tRNA ligase alpha subunit (342 aa).

Glu257 is a binding site for Mg(2+).

It belongs to the class-II aminoacyl-tRNA synthetase family. Phe-tRNA synthetase alpha subunit type 1 subfamily. As to quaternary structure, tetramer of two alpha and two beta subunits. The cofactor is Mg(2+).

It localises to the cytoplasm. The catalysed reaction is tRNA(Phe) + L-phenylalanine + ATP = L-phenylalanyl-tRNA(Phe) + AMP + diphosphate + H(+). The chain is Phenylalanine--tRNA ligase alpha subunit from Chlamydia trachomatis serovar A (strain ATCC VR-571B / DSM 19440 / HAR-13).